The following is a 226-amino-acid chain: UPF0173 metal-dependent hydrolase Minf_0129 (226 aa).

Belongs to the UPF0173 family.

The sequence is that of UPF0173 metal-dependent hydrolase Minf_0129 from Methylacidiphilum infernorum (isolate V4) (Methylokorus infernorum (strain V4)).